We begin with the raw amino-acid sequence, 346 residues long: Putative alpha/beta hydrolase R526 (346 aa).

It belongs to the AB hydrolase 3 family.

It localises to the virion. In Acanthamoeba polyphaga mimivirus (APMV), this protein is Putative alpha/beta hydrolase R526.